The sequence spans 224 residues: Transcriptional regulatory protein TctD (224 aa).

Residues 2–116 enclose the Response regulatory domain; it reads RLLLAEDNRE…ELDARLRALL (115 aa). 4-aspartylphosphate is present on Asp-51. Residues 121–219 constitute a DNA-binding region (ompR/PhoB-type); it reads GQVHEVQQLG…LRGLGYVLER (99 aa).

Transcriptional activator of the tctI tricarboxylate transport system operon. The protein is Transcriptional regulatory protein TctD (tctD) of Salmonella typhimurium (strain SL1344).